Here is a 68-residue protein sequence, read N- to C-terminus: Large ribosomal subunit protein bL32 (68 aa).

Positions 1-20 (MAVPQNRVTRSRRNMRRSHD) are disordered.

This sequence belongs to the bacterial ribosomal protein bL32 family.

The chain is Large ribosomal subunit protein bL32 from Cereibacter sphaeroides (strain ATCC 17029 / ATH 2.4.9) (Rhodobacter sphaeroides).